We begin with the raw amino-acid sequence, 1076 residues long: Enhancer of mRNA-decapping protein 4-like protein pdc1 (1076 aa).

2 stretches are compositionally biased toward low complexity: residues 1–19 and 53–69; these read MNEQ…LPNL and SSLL…SNQS. 3 disordered regions span residues 1–82, 95–127, and 139–204; these read MNEQ…ASHS, GAKP…FNPV, and STGP…AEEQ. The span at 70–82 shows a compositional bias: polar residues; that stretch reads PSNSGPKYYASHS. The segment covering 153-173 has biased composition (polar residues); that stretch reads NDSQDTAFQSSRNMPSDTSVA. Over residues 174 to 184 the composition is skewed to low complexity; that stretch reads SPDYSHSQSSS. The span at 185–195 shows a compositional bias: polar residues; it reads PIANYQESGNS. WD repeat units follow at residues 292–334 and 402–441; these read NSPN…STSE and DTGI…PSTP. Disordered regions lie at residues 666 to 714 and 892 to 934; these read RHST…SPSS and TAPD…PAQG. Over residues 669–688 the composition is skewed to polar residues; that stretch reads TASPSTVNSGFSTPRSQATG. A phosphoserine mark is found at Ser-671 and Ser-673. At Thr-674 the chain carries Phosphothreonine. Over residues 695-706 the composition is skewed to basic and acidic residues; it reads DKGERFETKDKS. The interval 789–1076 is interaction with dcp2; the sequence is MQVALKEEIA…ISEISVASSN (288 aa). Ser-1075 carries the post-translational modification Phosphoserine.

Belongs to the WD repeat EDC4 family. In terms of assembly, interacts with dcp2; via C-terminus.

It localises to the cytoplasm. The protein localises to the P-body. Functionally, involved in P-body formation. Acts as a functional homolog of human EDC4, which plays a role in mRNA decapping in the process of mRNA degradation. Enhances the decapping activity of dcp2. Together with edc3, acts as a scaffolding protein sufficient for the phase transition of the components of the 5' to 3' mRNA degradation machinery to form P-bodies. Intermolecular interactions between the edc3 Sm domain and at least 10 helical leucine-rich motifs in dcp2 and pdc1 build the core of the interaction network of this spontaneous clustering process. The chain is Enhancer of mRNA-decapping protein 4-like protein pdc1 from Schizosaccharomyces pombe (strain 972 / ATCC 24843) (Fission yeast).